A 293-amino-acid polypeptide reads, in one-letter code: 33 kDa chaperonin (293 aa).

Cystine bridges form between Cys236/Cys238 and Cys269/Cys272.

It belongs to the HSP33 family. Under oxidizing conditions two disulfide bonds are formed involving the reactive cysteines. Under reducing conditions zinc is bound to the reactive cysteines and the protein is inactive.

The protein resides in the cytoplasm. Redox regulated molecular chaperone. Protects both thermally unfolding and oxidatively damaged proteins from irreversible aggregation. Plays an important role in the bacterial defense system toward oxidative stress. In Lactobacillus delbrueckii subsp. bulgaricus (strain ATCC BAA-365 / Lb-18), this protein is 33 kDa chaperonin.